The primary structure comprises 284 residues: 4-diphosphocytidyl-2-C-methyl-D-erythritol kinase (284 aa).

Lys13 is a catalytic residue. Pro96–Ser106 is a binding site for ATP. Asp138 is a catalytic residue.

The protein belongs to the GHMP kinase family. IspE subfamily.

The catalysed reaction is 4-CDP-2-C-methyl-D-erythritol + ATP = 4-CDP-2-C-methyl-D-erythritol 2-phosphate + ADP + H(+). Its pathway is isoprenoid biosynthesis; isopentenyl diphosphate biosynthesis via DXP pathway; isopentenyl diphosphate from 1-deoxy-D-xylulose 5-phosphate: step 3/6. Catalyzes the phosphorylation of the position 2 hydroxy group of 4-diphosphocytidyl-2C-methyl-D-erythritol. In Chromobacterium violaceum (strain ATCC 12472 / DSM 30191 / JCM 1249 / CCUG 213 / NBRC 12614 / NCIMB 9131 / NCTC 9757 / MK), this protein is 4-diphosphocytidyl-2-C-methyl-D-erythritol kinase.